The primary structure comprises 140 residues: Large ribosomal subunit protein uL16 (140 aa).

The protein belongs to the universal ribosomal protein uL16 family. Part of the 50S ribosomal subunit.

In terms of biological role, binds 23S rRNA and is also seen to make contacts with the A and possibly P site tRNAs. The chain is Large ribosomal subunit protein uL16 from Onion yellows phytoplasma (strain OY-M).